We begin with the raw amino-acid sequence, 533 residues long: Yeast-form wall Protein 1 (533 aa).

Positions 1–21 (MKVSTIFAAASALFAATTTLA) are cleaved as a signal peptide. Asn115 is a glycosylation site (N-linked (GlcNAc...) asparagine). 2 disordered regions span residues 161-219 (YVPG…GEST) and 418-451 (PTKG…AHAS). Low complexity-rich tracts occupy residues 163–214 (PGSS…ATGA) and 427–451 (PGSP…AHAS). Gly511 is lipidated: GPI-anchor amidated glycine. Positions 512–533 (AAAASAGASVLALALIPLAYFI) are cleaved as a propeptide — removed in mature form.

This sequence belongs to the flocculin family. The GPI-anchor is attached to the protein in the endoplasmic reticulum and serves to target the protein to the cell surface. There, the glucosamine-inositol phospholipid moiety is cleaved off and the GPI-modified mannoprotein is covalently attached via its lipidless GPI glycan remnant to the 1,6-beta-glucan of the outer cell wall layer. In terms of processing, cleaved by SAP9 and SAP10, which leads to its release from the cell wall. Post-translationally, N-glycosylated.

The protein localises to the secreted. Its subcellular location is the cell wall. It is found in the membrane. Functionally, cell wall protein which plays an anti-adhesive role and promotes dispersal of yeast forms, which allows the organism to seek new sites for colonization. This chain is Yeast-form wall Protein 1 (YWP1), found in Candida albicans (strain SC5314 / ATCC MYA-2876) (Yeast).